Reading from the N-terminus, the 416-residue chain is Adenylosuccinate synthetase (416 aa).

GTP is bound by residues 11 to 17 (GDEGKGK) and 39 to 41 (GHT). Residue Asp-12 is the Proton acceptor of the active site. Positions 12 and 39 each coordinate Mg(2+). IMP contacts are provided by residues 12–15 (DEGK), 37–40 (NAGH), Thr-125, Arg-139, Gln-214, Thr-229, and Arg-290. His-40 functions as the Proton donor in the catalytic mechanism. 286–292 (TTTGRPR) lines the substrate pocket. GTP-binding positions include Arg-292, 318–320 (KLD), and 405–407 (SLG).

Belongs to the adenylosuccinate synthetase family. Homodimer. Requires Mg(2+) as cofactor.

It is found in the cytoplasm. The enzyme catalyses IMP + L-aspartate + GTP = N(6)-(1,2-dicarboxyethyl)-AMP + GDP + phosphate + 2 H(+). It functions in the pathway purine metabolism; AMP biosynthesis via de novo pathway; AMP from IMP: step 1/2. In terms of biological role, plays an important role in the de novo pathway of purine nucleotide biosynthesis. Catalyzes the first committed step in the biosynthesis of AMP from IMP. The protein is Adenylosuccinate synthetase of Picrophilus torridus (strain ATCC 700027 / DSM 9790 / JCM 10055 / NBRC 100828 / KAW 2/3).